A 396-amino-acid polypeptide reads, in one-letter code: Elongation factor Tu (396 aa).

A tr-type G domain is found at 10–206; the sequence is KPHVNVGTIG…ALDSYIPTPK (197 aa). Positions 19–26 are G1; it reads GHVDHGKT. 19-26 contacts GTP; that stretch reads GHVDHGKT. T26 is a Mg(2+) binding site. The tract at residues 60–64 is G2; sequence GITIS. Residues 81–84 form a G3 region; that stretch reads DCPG. GTP is bound by residues 81–85 and 136–139; these read DCPGH and NKAD. The interval 136–139 is G4; sequence NKAD. The interval 174–176 is G5; the sequence is SAL.

Belongs to the TRAFAC class translation factor GTPase superfamily. Classic translation factor GTPase family. EF-Tu/EF-1A subfamily. As to quaternary structure, monomer.

The protein localises to the cytoplasm. It carries out the reaction GTP + H2O = GDP + phosphate + H(+). Functionally, GTP hydrolase that promotes the GTP-dependent binding of aminoacyl-tRNA to the A-site of ribosomes during protein biosynthesis. The chain is Elongation factor Tu from Vesicomyosocius okutanii subsp. Calyptogena okutanii (strain HA).